A 291-amino-acid polypeptide reads, in one-letter code: Formamidopyrimidine-DNA glycosylase (291 aa).

Proline 2 acts as the Schiff-base intermediate with DNA in catalysis. Glutamate 3 functions as the Proton donor in the catalytic mechanism. Lysine 60 (proton donor; for beta-elimination activity) is an active-site residue. Residues histidine 108 and arginine 127 each coordinate DNA. The FPG-type zinc-finger motif lies at 257–291 (WVYRRGGQACRICSTPIRRESLCGRGTHWCPNCQR). Arginine 281 acts as the Proton donor; for delta-elimination activity in catalysis.

This sequence belongs to the FPG family. In terms of assembly, monomer. Requires Zn(2+) as cofactor.

It carries out the reaction Hydrolysis of DNA containing ring-opened 7-methylguanine residues, releasing 2,6-diamino-4-hydroxy-5-(N-methyl)formamidopyrimidine.. The enzyme catalyses 2'-deoxyribonucleotide-(2'-deoxyribose 5'-phosphate)-2'-deoxyribonucleotide-DNA = a 3'-end 2'-deoxyribonucleotide-(2,3-dehydro-2,3-deoxyribose 5'-phosphate)-DNA + a 5'-end 5'-phospho-2'-deoxyribonucleoside-DNA + H(+). Functionally, involved in base excision repair of DNA damaged by oxidation or by mutagenic agents. Acts as a DNA glycosylase that recognizes and removes damaged bases. Has a preference for oxidized purines, such as 7,8-dihydro-8-oxoguanine (8-oxoG). Has AP (apurinic/apyrimidinic) lyase activity and introduces nicks in the DNA strand. Cleaves the DNA backbone by beta-delta elimination to generate a single-strand break at the site of the removed base with both 3'- and 5'-phosphates. The chain is Formamidopyrimidine-DNA glycosylase from Prochlorococcus marinus (strain MIT 9313).